The sequence spans 447 residues: Mannose/glucose-specific lectin (447 aa).

3 consecutive Jacalin-type lectin domains span residues 5–148 (MISV…FVKP), 153–294 (TISF…YVKP), and 300–443 (SISI…FVKP).

It belongs to the jacalin lectin family. As to expression, expressed in seeds (at protein level).

Its activity is regulated as follows. Hemagglutinating activity is slightly inhibited by alpha-methyl-D-mannopyranoside. Its function is as follows. D-mannose/D-glucose-binding lectin that also binds derivatives N-acetyl-D-glucosamine and alpha-methyl-D-mannopyranoside. Does not bind D-galactose, L-Rhamnose, D-fructose, lactose or glycoproteins fetiun and mucin. Shows agglutinating activity towards human and rabbit erythrocytes. Also displays antimicrobial activity against L.infantum. This Parkia pendula (Inga pendula) protein is Mannose/glucose-specific lectin.